The sequence spans 576 residues: Sodium/proton antiporter 1 (576 aa).

The transit peptide at 1–60 (MAVFPIGSHFAPPHQLTKRHVIATSSPISISTRLPQNVSFSKVSGVTGSTRLSKHGVLVR) directs the protein to the chloroplast. Transmembrane regions (helical) follow at residues 237 to 257 (TLLWVVGFVTFFLSSILDNLT), 279 to 299 (LGGVVVIAANAGGAWTPIGDV), 320 to 340 (FLPSVVSLAVPLALMSLTSEV), 357 to 377 (APRGKLVFGVGLGALVFVPVF), 379 to 399 (ALTGLPPYMGILLGLGVLWIL), 426 to 446 (GALFFLGILLSVSSLEAAGIL), 462 to 482 (LIASAIGVVSAIIDNVPLVAA), 501 to 521 (LIAFCAGTGGSMLVIGSAAGV), and 541 to 561 (FAFAGYAAGIAAYLAVHNLHF).

It belongs to the NhaD Na(+)/H(+) (TC 2.A.62) antiporter family. Mostly expressed in mature and senescent leaves, and, to a lower extent, in seeds, roots, shoots, flowers and developing siliques.

Its subcellular location is the plastid. It is found in the chloroplast membrane. It localises to the chloroplast envelope. Na(+)/H(+) antiporter that extrudes sodium in exchange for external protons. This Arabidopsis thaliana (Mouse-ear cress) protein is Sodium/proton antiporter 1.